A 104-amino-acid polypeptide reads, in one-letter code: T-complex protein 1 subunit zeta (104 aa).

G24 contributes to the ADP binding site. G24 contributes to the ATP binding site. Residue D75 participates in Mg(2+) binding. The ADP site is built by G76, T78, and S79. ATP is bound by residues G76 and T78.

This sequence belongs to the TCP-1 chaperonin family. As to quaternary structure, component of the chaperonin-containing T-complex (TRiC), a hexadecamer composed of two identical back-to-back stacked rings enclosing a protein folding chamber. Each ring is made up of eight different subunits: TCP1/CCT1, CCT2, CCT3, CCT4, CCT5, CCT6A/CCT6, CCT7, CCT8. Interacts with PACRG.

It localises to the cytoplasm. The enzyme catalyses ATP + H2O = ADP + phosphate + H(+). Its function is as follows. Component of the chaperonin-containing T-complex (TRiC), a molecular chaperone complex that assists the folding of actin, tubulin and other proteins upon ATP hydrolysis. The TRiC complex mediates the folding of WRAP53/TCAB1, thereby regulating telomere maintenance. This is T-complex protein 1 subunit zeta (CCT6) from Sus scrofa (Pig).